A 259-amino-acid chain; its full sequence is Formate channel BtFdhC (259 aa).

At 1–26 (MAFHKPEQIAELVIEAGVQKVSQTLP) the chain is on the cytoplasmic side. A helical membrane pass occupies residues 27-47 (AMLILGFLGGAFISLGFLLNI). Residues 48 to 66 (RVLGNLPERWGSLVNVLGG) lie on the Periplasmic side of the membrane. A helical transmembrane segment spans residues 67–97 (AVFPVGLMLVVLAGGELITGNMMSLSMALYA). The Cytoplasmic segment spans residues 98–108 (KKITLVSVLNN). The chain crosses the membrane as a helical span at residues 109–130 (WVWITFMNFVGAIFVAYCFGHL). The Periplasmic portion of the chain corresponds to 131-157 (GGLTEGDYLNKTVAIAEGKLHESFGRT). A helical membrane pass occupies residues 158 to 176 (LILAIGCNWLVCLALWLAY). Residues 177-187 (GTSDFVGKIIG) lie on the Cytoplasmic side of the membrane. Residues 188–216 (IWIPIMAFVVIGFQQVVANMFVISAVIFA) traverse the membrane as a helical segment. At 217 to 227 (GHLTWMDLARN) the chain is on the periplasmic side. The helical transmembrane segment at 228 to 250 (FVPVFIGNVIGGAGFVGFAYFAC) threads the bilayer. Residues 251–259 (YQKQHSNMK) are Cytoplasmic-facing.

Belongs to the FNT transporter (TC 1.A.16) family.

It localises to the cell inner membrane. It catalyses the reaction formate(in) = formate(out). Its function is as follows. Acts as a formate transporter. The sequence is that of Formate channel BtFdhC from Bacillus thuringiensis.